A 1156-amino-acid polypeptide reads, in one-letter code: Cartilage intermediate layer protein 2 (1156 aa).

Residues 1–20 (MASLLPLLCLCVVAAHLAGA) form the signal peptide. Positions 146 to 197 (EASWGAWGPWGPCSGSCGPGRRLRRRHCPSPAGDACPGRPLEAQKCVRPRCP) constitute a TSP type-1 domain. Cystine bridges form between C158-C191, C162-C196, and C173-C181. N-linked (GlcNAc...) asparagine glycans are attached at residues N276, N308, and N329. The Ig-like C2-type domain occupies 292 to 376 (PYLVKHPESR…AVRSGTARLT (85 aa)). A disulfide bridge connects residues C313 and C359. Residues 1134 to 1156 (SEAAQAQARASGPLRTRRGRVRQ) form a disordered region.

May be cleaved into 2 chains possibly by a furin-like protease upon or preceding secretion. In terms of tissue distribution, expressed in articular chondrocytes but not in knee meniscal cartilage cells. Localizes to the intermediate to deep zone of articular cartilage.

Its subcellular location is the secreted. It localises to the extracellular space. It is found in the extracellular matrix. Functionally, may play a role in cartilage scaffolding. The sequence is that of Cartilage intermediate layer protein 2 (CILP2) from Homo sapiens (Human).